Here is a 329-residue protein sequence, read N- to C-terminus: Mas-related G-protein coupled receptor member X2 (329 aa).

Over 1–33 (MDPTTPAWRTESTTMNGNDQALPLLCGKEILIS) the chain is Extracellular. Residues 34–54 (VFLILFIALVGLVGNGFVLWL) traverse the membrane as a helical segment. Residues 55 to 63 (LGFRMRRNA) lie on the Cytoplasmic side of the membrane. The chain crosses the membrane as a helical span at residues 64–84 (FSVYVLSLAGADFLFLCFQII). Over 85–96 (NCLVYLSNFFCS) the chain is Extracellular. Residues 97–117 (SSINFPSFFTTVMTCAYLAGL) form a helical membrane-spanning segment. At 118–144 (SMLSTISTERCLSVLWPIWYRCRRPRH) the chain is on the cytoplasmic side. A helical membrane pass occupies residues 145–165 (LSAVACVLLWALSLLLSILEG). The Extracellular portion of the chain corresponds to 166–183 (KFCGLFGDGDSGWCQTFD). The chain crosses the membrane as a helical span at residues 184-204 (LITAAWLIFLFMVLCGSSLAL). The Cytoplasmic segment spans residues 205–227 (LVRILCGSRGLPLTRLYLTILLT). The helical transmembrane segment at 228–248 (VLVFLLCGLPFGIQWFLILWI) threads the bilayer. At 249-263 (WKNSDVLFCHIHPVS) the chain is on the extracellular side. Residues 264–284 (VVLSSLNSSANPIIYFFVGSF) traverse the membrane as a helical segment. Residues 285-329 (RKQWQLQQPILKLALQRALQDIAEVDHSEGCFRQGTPEMSRSSLV) lie on the Cytoplasmic side of the membrane.

Belongs to the G-protein coupled receptor 1 family. Mas subfamily.

Its subcellular location is the cell membrane. In terms of biological role, mast cell-specific receptor for basic secretagogues, i.e. cationic amphiphilic drugs, as well as endo- or exogenous peptides, consisting of a basic head group and a hydrophobic core. Recognizes and binds small molecules containing a cyclized tetrahydroisoquinoline (THIQ), such as non-steroidal neuromuscular blocking drugs (NMBDs), including tubocurarine and atracurium. In response to these compounds, mediates pseudo-allergic reactions characterized by histamine release, inflammation and airway contraction. This is Mas-related G-protein coupled receptor member X2 (MRGPRX2) from Gorilla gorilla gorilla (Western lowland gorilla).